The primary structure comprises 367 residues: Uroporphyrinogen decarboxylase (367 aa).

Residue M1 is modified to N-acetylmethionine. The coproporphyrinogen I site is built by R37, A39, R41, R50, D86, Y164, S219, and H339. 3 residues coordinate coproporphyrinogen III: R37, A39, and R41. Residues D86, Y164, S219, and H339 each contribute to the coproporphyrinogen III site.

It belongs to the uroporphyrinogen decarboxylase family. In terms of assembly, homodimer.

Its subcellular location is the cytoplasm. The protein localises to the cytosol. The enzyme catalyses uroporphyrinogen III + 4 H(+) = coproporphyrinogen III + 4 CO2. The catalysed reaction is uroporphyrinogen I + 4 H(+) = coproporphyrinogen I + 4 CO2. It participates in porphyrin-containing compound metabolism; protoporphyrin-IX biosynthesis; coproporphyrinogen-III from 5-aminolevulinate: step 4/4. Its function is as follows. Catalyzes the sequential decarboxylation of the four acetate side chains of uroporphyrinogen to form coproporphyrinogen and participates in the fifth step in the heme biosynthetic pathway. Isomer I or isomer III of uroporphyrinogen may serve as substrate, but only coproporphyrinogen III can ultimately be converted to heme. In vitro also decarboxylates pentacarboxylate porphyrinogen I. In Pongo abelii (Sumatran orangutan), this protein is Uroporphyrinogen decarboxylase.